Here is a 313-residue protein sequence, read N- to C-terminus: Monoglyceride lipase (313 aa).

Residues 121–125 carry the GXSXG motif; it reads GHSMG. Catalysis depends on Ser123, which acts as the Nucleophile. Catalysis depends on charge relay system residues Asp251 and His281.

It belongs to the AB hydrolase superfamily. Monoacylglycerol lipase family.

It is found in the lipid droplet. The protein localises to the cytoplasm. It localises to the endoplasmic reticulum. Its subcellular location is the mitochondrion outer membrane. The catalysed reaction is Hydrolyzes glycerol monoesters of long-chain fatty acids.. The enzyme catalyses a fatty acid ethyl ester + H2O = ethanol + a fatty acid + H(+). It carries out the reaction 1-(9Z-octadecenoyl)-glycerol + H2O = glycerol + (9Z)-octadecenoate + H(+). It catalyses the reaction 2-(9Z-octadecenoyl)-glycerol + H2O = glycerol + (9Z)-octadecenoate + H(+). The catalysed reaction is 1-hexadecanoylglycerol + H2O = glycerol + hexadecanoate + H(+). The enzyme catalyses 2-hexadecanoylglycerol + H2O = glycerol + hexadecanoate + H(+). It carries out the reaction ethyl hexadecanoate + H2O = ethanol + hexadecanoate + H(+). It catalyses the reaction ethyl (9Z)-octadecenoate + H2O = ethanol + (9Z)-octadecenoate + H(+). The catalysed reaction is ethyl (9Z)-hexadecenoate + H2O = (9Z)-hexadecenoate + ethanol + H(+). The enzyme catalyses ethyl octadecanoate + H2O = ethanol + octadecanoate + H(+). It participates in glycerolipid metabolism; triacylglycerol degradation. In terms of biological role, converts monoacylglycerides (MAG) to free fatty acids and glycerol. Has a strong preference for monounsaturated monoglycerides. Required for efficient degradation of MAG, short-lived intermediates of glycerolipid metabolism which may also function as lipid signaling molecules. Controls inactivation of the signaling lipid N-palmitoylethanolamine (PEA). Involved in fatty acid ethyl ester (FAEE) catabolism. FAEEs are non-oxidative metabolites of ethanol that are transiently incorporated into lipid droplets (LDs). Their mobilization by LD-resident FAEE hydrolases facilitates a controlled metabolism of these potentially toxic lipid metabolites. This Saccharomyces cerevisiae (strain ATCC 204508 / S288c) (Baker's yeast) protein is Monoglyceride lipase (YJU3).